Consider the following 201-residue polypeptide: 3-isopropylmalate dehydratase small subunit (201 aa).

Belongs to the LeuD family. LeuD type 1 subfamily. In terms of assembly, heterodimer of LeuC and LeuD.

The enzyme catalyses (2R,3S)-3-isopropylmalate = (2S)-2-isopropylmalate. It functions in the pathway amino-acid biosynthesis; L-leucine biosynthesis; L-leucine from 3-methyl-2-oxobutanoate: step 2/4. Functionally, catalyzes the isomerization between 2-isopropylmalate and 3-isopropylmalate, via the formation of 2-isopropylmaleate. The polypeptide is 3-isopropylmalate dehydratase small subunit (Shewanella piezotolerans (strain WP3 / JCM 13877)).